A 126-amino-acid polypeptide reads, in one-letter code: DNA-directed RNA polymerase subunit omega (126 aa).

This sequence belongs to the RNA polymerase subunit omega family. As to quaternary structure, the RNAP catalytic core consists of 2 alpha, 1 beta, 1 beta' and 1 omega subunit. When a sigma factor is associated with the core the holoenzyme is formed, which can initiate transcription.

The catalysed reaction is RNA(n) + a ribonucleoside 5'-triphosphate = RNA(n+1) + diphosphate. Functionally, promotes RNA polymerase assembly. Latches the N- and C-terminal regions of the beta' subunit thereby facilitating its interaction with the beta and alpha subunits. This chain is DNA-directed RNA polymerase subunit omega, found in Rickettsia bellii (strain OSU 85-389).